We begin with the raw amino-acid sequence, 132 residues long: Global transcriptional regulator Spx (132 aa).

Cys-10 and Cys-13 form a disulfide bridge.

It belongs to the ArsC family. Spx subfamily. Interacts with the C-terminal domain of the alpha subunit of the RNAP.

It localises to the cytoplasm. Global transcriptional regulator that plays a key role in stress response and exerts either positive or negative regulation of genes. Acts by interacting with the C-terminal domain of the alpha subunit of the RNA polymerase (RNAP). This interaction can enhance binding of RNAP to the promoter region of target genes and stimulate their transcription, or block interaction of RNAP with activator. This chain is Global transcriptional regulator Spx, found in Enterococcus faecalis (strain ATCC 700802 / V583).